The following is a 412-amino-acid chain: Probable tRNA sulfurtransferase (412 aa).

Residues 1–22 (MPDIFTDNTDKQDSDPSRQGFE) form a disordered region. Residues 82–190 (PRAAEAAADV…QNLAYVYLET (109 aa)) enclose the THUMP domain. Residues 208–209 (LM), K292, G314, and Q323 contribute to the ATP site.

This sequence belongs to the ThiI family.

It localises to the cytoplasm. It carries out the reaction [ThiI sulfur-carrier protein]-S-sulfanyl-L-cysteine + a uridine in tRNA + 2 reduced [2Fe-2S]-[ferredoxin] + ATP + H(+) = [ThiI sulfur-carrier protein]-L-cysteine + a 4-thiouridine in tRNA + 2 oxidized [2Fe-2S]-[ferredoxin] + AMP + diphosphate. It catalyses the reaction [ThiS sulfur-carrier protein]-C-terminal Gly-Gly-AMP + S-sulfanyl-L-cysteinyl-[cysteine desulfurase] + AH2 = [ThiS sulfur-carrier protein]-C-terminal-Gly-aminoethanethioate + L-cysteinyl-[cysteine desulfurase] + A + AMP + 2 H(+). It functions in the pathway cofactor biosynthesis; thiamine diphosphate biosynthesis. Functionally, catalyzes the ATP-dependent transfer of a sulfur to tRNA to produce 4-thiouridine in position 8 of tRNAs, which functions as a near-UV photosensor. Also catalyzes the transfer of sulfur to the sulfur carrier protein ThiS, forming ThiS-thiocarboxylate. This is a step in the synthesis of thiazole, in the thiamine biosynthesis pathway. The sulfur is donated as persulfide by IscS. The sequence is that of Probable tRNA sulfurtransferase from Methanosarcina acetivorans (strain ATCC 35395 / DSM 2834 / JCM 12185 / C2A).